Consider the following 66-residue polypeptide: Beta-toxin Cb3 (66 aa).

The 66-residue stretch at 1–66 (KEGYIVNYYD…VWPLPNKTCL (66 aa)) folds into the LCN-type CS-alpha/beta domain. Disulfide bonds link cysteine 12/cysteine 65, cysteine 16/cysteine 41, cysteine 25/cysteine 46, and cysteine 29/cysteine 48.

The protein belongs to the long (4 C-C) scorpion toxin superfamily. Sodium channel inhibitor family. Beta subfamily. As to expression, expressed by the venom gland.

It localises to the secreted. Its function is as follows. Beta toxins bind voltage-independently at site-4 of sodium channels (Nav) and reduces peak current and shifts the voltage of activation toward more negative potentials thereby affecting sodium channel activation and promoting spontaneous and repetitive firing. Has an inhibitory effect on voltage-gated sodium channels hNav1.1/SCN1A, hNav1.2/SCN2A, hNav1.4/SCN4A and hNav1.6/SCN8A. Reduces the peak current of hNav1.5/SCN5A but does not shift its voltage of activation. Also affects the inactivation processes of hNav1.1/SCN1A, hNav1.4/SCN4A, hNav1.5/SCN5A and hNav1.6/SCN8A. This toxin is active against mammals and lethal to mice. The protein is Beta-toxin Cb3 of Centruroides baergi (Scorpion).